A 337-amino-acid chain; its full sequence is Fructose-1,6-bisphosphatase class 1 (337 aa).

E90, D112, L114, and D115 together coordinate Mg(2+). Substrate contacts are provided by residues 115 to 118, N211, and K277; that span reads DGSS. E283 serves as a coordination point for Mg(2+).

The protein belongs to the FBPase class 1 family. In terms of assembly, homotetramer. Mg(2+) is required as a cofactor.

Its subcellular location is the cytoplasm. It catalyses the reaction beta-D-fructose 1,6-bisphosphate + H2O = beta-D-fructose 6-phosphate + phosphate. The protein operates within carbohydrate biosynthesis; gluconeogenesis. The protein is Fructose-1,6-bisphosphatase class 1 of Azotobacter vinelandii (strain DJ / ATCC BAA-1303).